A 246-amino-acid polypeptide reads, in one-letter code: MRVGIIGCSGRMGTLLSNLLRATARFTLGPGFSRTSTHSLASVIDNNDVLVDFSSSSLSEELFRALLSNPKPLIFATTKPAPSSSIDEKIEDLAAYVPVVVCPNTSLGAYVQKRLAALLAAVFDDAYDIRITEVHHRGKKDAISGTANELVSILCDAKKKEWQQEYRVGADSDSVKNIELHASRVGNISGEHEIAFISDKEQITLRHTVFSREVFAEGVLRILDWLLNESPPPGCYGPEVGLKVSV.

7–12 contributes to the NAD(+) binding site; it reads GCSGRM. Position 34 (Arg-34) interacts with NADP(+). NAD(+)-binding positions include 76–78 and 102–105; these read ATT and CPNT. The Proton donor/acceptor role is filled by His-135. His-136 lines the (S)-2,3,4,5-tetrahydrodipicolinate pocket. The active-site Proton donor is Lys-139. Residue 145–146 participates in (S)-2,3,4,5-tetrahydrodipicolinate binding; sequence GT.

The protein belongs to the DapB family.

It localises to the cytoplasm. It catalyses the reaction (S)-2,3,4,5-tetrahydrodipicolinate + NAD(+) + H2O = (2S,4S)-4-hydroxy-2,3,4,5-tetrahydrodipicolinate + NADH + H(+). The enzyme catalyses (S)-2,3,4,5-tetrahydrodipicolinate + NADP(+) + H2O = (2S,4S)-4-hydroxy-2,3,4,5-tetrahydrodipicolinate + NADPH + H(+). It functions in the pathway amino-acid biosynthesis; L-lysine biosynthesis via DAP pathway; (S)-tetrahydrodipicolinate from L-aspartate: step 4/4. In terms of biological role, catalyzes the conversion of 4-hydroxy-tetrahydrodipicolinate (HTPA) to tetrahydrodipicolinate. The chain is 4-hydroxy-tetrahydrodipicolinate reductase from Chlamydia caviae (strain ATCC VR-813 / DSM 19441 / 03DC25 / GPIC) (Chlamydophila caviae).